The chain runs to 372 residues: Heat-inducible transcription repressor HrcA (372 aa).

Residues 300-334 form a disordered region; it reads YGRSGAAGEPAGNDPVGEPETESETESQTNDTEPI.

The protein belongs to the HrcA family.

In terms of biological role, negative regulator of class I heat shock genes (grpE-dnaK-dnaJ and groELS operons). Prevents heat-shock induction of these operons. The sequence is that of Heat-inducible transcription repressor HrcA from Bifidobacterium longum (strain NCC 2705).